The following is a 94-amino-acid chain: Scorpine (94 aa).

A signal peptide spans 1-19; it reads MNSKLTALIFLGLIAIAYC. The region spanning 55 to 94 is the BetaSPN-type CS-alpha/beta domain; the sequence is EFQCMANMDMLGNCEKHCQTSGEKGYCHGTKCKCGTPLSY. 3 cysteine pairs are disulfide-bonded: Cys58–Cys81, Cys68–Cys86, and Cys72–Cys88.

It belongs to the long chain scorpion toxin family. Class 3 subfamily. As to expression, expressed by the venom gland.

It is found in the secreted. The protein resides in the target cell membrane. Its function is as follows. This full-length protein shows antibacterial activity against B.subtilis and K.pneumoniae. Also shows a potent inhibitory effect on the ookinete (ED(50) 0.7 uM) and gamete (ED(50) 10 uM) stages of Plasmodium berghei development. In addition, induces cell membrane disruption, leakage currents and cell death on HEK293 cell line (tested at 25 uM). In Pandinus imperator (Emperor scorpion), this protein is Scorpine.